Here is a 98-residue protein sequence, read N- to C-terminus: NADH-ubiquinone oxidoreductase chain 4L (98 aa).

3 consecutive transmembrane segments (helical) span residues Met1–Thr21, Val27–Ile47, and Ile61–Ile81.

Belongs to the complex I subunit 4L family. In terms of assembly, core subunit of respiratory chain NADH dehydrogenase (Complex I) which is composed of 45 different subunits.

The protein resides in the mitochondrion inner membrane. The enzyme catalyses a ubiquinone + NADH + 5 H(+)(in) = a ubiquinol + NAD(+) + 4 H(+)(out). In terms of biological role, core subunit of the mitochondrial membrane respiratory chain NADH dehydrogenase (Complex I) which catalyzes electron transfer from NADH through the respiratory chain, using ubiquinone as an electron acceptor. Part of the enzyme membrane arm which is embedded in the lipid bilayer and involved in proton translocation. This chain is NADH-ubiquinone oxidoreductase chain 4L (MT-ND4L), found in Macaca sylvanus (Barbary macaque).